Here is a 387-residue protein sequence, read N- to C-terminus: Acyl-CoA dehydrogenase FadE29 (387 aa).

FAD contacts are provided by residues 123 to 126 (IGYT), threonine 132, and threonine 158. The Proton acceptor role is filled by glutamate 241. 367 to 369 (VNE) contacts FAD.

The protein belongs to the acyl-CoA dehydrogenase family. In terms of assembly, heterotetramer composed of FadE28 and FadE29. FAD serves as cofactor.

The catalysed reaction is 3-oxochol-4-en-22-oyl-CoA + A = 3-oxochola-4,17-dien-22-oyl-CoA + AH2. It functions in the pathway steroid metabolism; cholesterol degradation. Its function is as follows. Involved in the third cycle of side chain dehydrogenation in the beta-oxidation of cholesterol catabolism. Contributes partly to the virulence by increasing the efficiency of beta-oxidation. Catalyzes the dehydrogenation of 2'-propanoyl-CoA ester side chains of 3-oxo-4-pregnene-20-carboxyl-CoA (3-OPC-CoA) to yield 3-oxo-4,17-pregnadiene-20-carboxyl-CoA (3-OPDC-CoA). Also able to dehydrogenate steroyl-CoA such as 3-oxo-chol-4-en-24-oyl-CoA (3-OCO-CoA), 1beta-(2'-propanoyl-CoA)-3a-alpha-H- 7a-beta-methylhexahydro-4-indanone (indanone-CoA ester), hexahydroindanone and pregenenone. This chain is Acyl-CoA dehydrogenase FadE29 (fadE29), found in Mycobacterium tuberculosis (strain ATCC 25618 / H37Rv).